The following is a 342-amino-acid chain: MAPRVGLGLGQLEAVTILLLLGLLQSGIRADGTEASCGAVIQPRITGGGSAKPGQWPWQVSITYDGNHVCGGSLVSNKWVVSAAHCFPREHSREAYEVKLGAHQLDSYSNDTVVHTVAQIITHSSYREEGSQGDIAFIRLSSPVTFSRYIRPICLPAANASFPNGLHCTVTGWGHVAPSVSLQTPRPLQQLEVPLISRETCSCLYNINAVPEEPHTIQQDMLCAGYVKGGKDACQGDSGGPLSCPMEGIWYLAGIVSWGDACGAPNRPGVYTLTSTYASWIHHHVAELQPRVVPQTQESQPDGHLCNHHPVFSSAAAPKLLRPVLFLPLGLTLGLLSLWLEH.

Residues 1–29 (MAPRVGLGLGQLEAVTILLLLGLLQSGIR) form the signal peptide. The propeptide at 30–32 (ADG) is activation peptide. 2 cysteine pairs are disulfide-bonded: Cys-37–Cys-154 and Cys-70–Cys-86. A Peptidase S1 domain is found at 45-286 (ITGGGSAKPG…YASWIHHHVA (242 aa)). His-85 serves as the catalytic Charge relay system. N-linked (GlcNAc...) asparagine glycosylation occurs at Asn-110. Residue Asp-134 is the Charge relay system of the active site. Asn-159 carries N-linked (GlcNAc...) asparagine glycosylation. 3 disulfides stabilise this stretch: Cys-168-Cys-244, Cys-201-Cys-223, and Cys-234-Cys-262. Ser-238 (charge relay system) is an active-site residue. The helical transmembrane segment at 320-340 (LLRPVLFLPLGLTLGLLSLWL) threads the bilayer. A propeptide spanning residues 323–342 (PVLFLPLGLTLGLLSLWLEH) is cleaved from the precursor.

Belongs to the peptidase S1 family. In terms of assembly, heterodimer of two chains, light and heavy, held by a disulfide bond.

Its subcellular location is the cell membrane. It is found in the secreted. The protein resides in the extracellular space. Its function is as follows. Possesses a trypsin-like cleavage specificity with a preference for poly-basic substrates. Stimulates epithelial sodium channel (ENaC) activity through activating cleavage of the gamma subunits (SCNN1G). The chain is Prostasin (Prss8) from Mus musculus (Mouse).